The sequence spans 833 residues: AdoMet-dependent rRNA methyltransferase SPB1 (833 aa).

Residues G59, W61, D79, D95, and D120 each contribute to the S-adenosyl-L-methionine site. The active-site Proton acceptor is the K160. Coiled coils occupy residues 348–389 (EEEQ…QLNM) and 453–481 (RDEL…SERD). Residues 477–493 (KSERDAKFRAKQARESS) are compositionally biased toward basic and acidic residues. Disordered stretches follow at residues 477-532 (KSER…SDDD), 592-645 (KRKL…EKHS), and 776-810 (VTKK…GKYK). Composition is skewed to acidic residues over residues 505–532 (QSDE…SDDD) and 622–634 (EDGD…DSEE). The segment covering 635-645 (EAKRTKQEKHS) has biased composition (basic and acidic residues). The stretch at 730–782 (AEAKARKKHRAVARLEKLKKKAGLINDDSDKSEKDKAEEIAKLMRKVTKKAKQ) forms a coiled coil.

This sequence belongs to the class I-like SAM-binding methyltransferase superfamily. RNA methyltransferase RlmE family. SPB1 subfamily. Component of the nucleolar and nucleoplasmic pre-60S ribosomal particle.

It is found in the nucleus. The protein resides in the nucleolus. It catalyses the reaction a ribonucleotide in rRNA + S-adenosyl-L-methionine = a 2'-O-methylribonucleotide in rRNA + S-adenosyl-L-homocysteine + H(+). Its function is as follows. Required for proper assembly of pre-ribosomal particles during the biogenesis of the 60S ribosomal subunit. The chain is AdoMet-dependent rRNA methyltransferase SPB1 from Kluyveromyces lactis (strain ATCC 8585 / CBS 2359 / DSM 70799 / NBRC 1267 / NRRL Y-1140 / WM37) (Yeast).